The primary structure comprises 601 residues: Putative purine permease C1399.01c (601 aa).

12 helical membrane-spanning segments follow: residues 64 to 84 (VPVLLALLLGFQHALAMVGGV), 102 to 122 (TNYLVSAGLISSGIMTLIQIA), 131 to 151 (YYIGTGMLSVLGISFTSVSVA), 179 to 199 (YGAFLATACVCSLLEIFMSFI), 207 to 227 (LFPPIVTGPVVLLIGTSLISS), 264 to 284 (GWGSAQFIGLGFSVFATIIII), 294 to 314 (TTSVVLGLVVGMIISAATGYW), 337 to 357 (IYGPAVLPMLALYIVNMMEAI), 424 to 444 (FFCAVILFFMGLFAKFAAVFV), 450 to 470 (VLGGMTTFLFSSVAVSGIAII), 481 to 501 (FILTASMTLGMGAILVPDWFT), and 522 to 542 (LVMENGFAIGAFISIFLNLIL).

Belongs to the nucleobase:cation symporter-2 (NCS2) (TC 2.A.40) family.

Its subcellular location is the vacuole membrane. In Schizosaccharomyces pombe (strain 972 / ATCC 24843) (Fission yeast), this protein is Putative purine permease C1399.01c.